The following is a 1006-amino-acid chain: DNA polymerase (1006 aa).

The protein belongs to the DNA polymerase type-B family. In terms of assembly, interacts with OPG148. Component of the Uracil-DNA glycosylase(UDG)-OPG148-polymerase complex; OPG148 and OPG116/UDG form a heterodimeric processivity factor that associates with OPG071 to form the processive polymerase holoenzyme.

The enzyme catalyses DNA(n) + a 2'-deoxyribonucleoside 5'-triphosphate = DNA(n+1) + diphosphate. In terms of biological role, catalyzes DNA synthesis. Acquires processivity by associating with a heterodimeric processivity factor comprised of the viral OPG148 and OPG116 proteins, thereby forming the DNA polymerase holoenzyme. Displays 3'- to 5' exonuclease activity. Might participate in viral DNA recombination. Does not perform OPG116/D4synthesis across an abasic site. The sequence is that of DNA polymerase (OPG071) from Monkeypox virus.